A 204-amino-acid polypeptide reads, in one-letter code: Small ribosomal subunit protein uS4c (204 aa).

Positions methionine 90–isoleucine 150 constitute an S4 RNA-binding domain.

It belongs to the universal ribosomal protein uS4 family. Part of the 30S ribosomal subunit. Contacts protein S5. The interaction surface between S4 and S5 is involved in control of translational fidelity.

The protein localises to the plastid. The protein resides in the chloroplast. Functionally, one of the primary rRNA binding proteins, it binds directly to 16S rRNA where it nucleates assembly of the body of the 30S subunit. Its function is as follows. With S5 and S12 plays an important role in translational accuracy. This chain is Small ribosomal subunit protein uS4c (rps4), found in Gnetum parvifolium (Small-leaved jointfir).